A 164-amino-acid polypeptide reads, in one-letter code: Heat shock protein beta-6 (164 aa).

Residues 1–72 form an involved in stabilization of the HSPB1:HSBP6 heterodimer region; the sequence is MEIPVSVQPS…PTAQVSTDPG (72 aa). Serine 16 carries the post-translational modification Phosphoserine. A sHSP domain is found at 56-163; the sequence is RAPSVALPTA…PLQSPPGAAA (108 aa). Glutamine 66 carries the deamidated glutamine modification. A Phosphoserine modification is found at serine 157.

This sequence belongs to the small heat shock protein (HSP20) family. Homodimer. Small heat shock proteins form high molecular mass oligomers containing variable number of monomers; these oligomers display a very flexible quaternary structure easily exchanging their subunits. Heterooligomer with HSPB1; formed through oligomerization of HSPB1:HSBP6 dimers; subunit exchange leads to formation of at least two different heterooligomeric complexes, differing in variable quantities of HSPB1 and HSPB6 homodimers in addition to HSPB1:HSPB6 heterodimers. Heterooligomer with CRYAB; large heterooligomers consist of CRYAB homodimers and HSPB5:HSPB6 heterodimers but lacking HSPB6 homodimers. Interacts with BAG3. Interacts (phosphorylated) with YWHAZ. Interacts with PDE4A and PDE4D; required for maintenance of the non-phosphorylated state of HSPB6 under basal conditions. Interacts with KDR. Interacts with PRKD1. Phosphorylated at Ser-16 by PKA and probably PKD1K; required to protect cardiomyocytes from apoptosis.

It localises to the cytoplasm. Its subcellular location is the nucleus. The protein localises to the secreted. Functionally, small heat shock protein which functions as a molecular chaperone probably maintaining denatured proteins in a folding-competent state. Seems to have versatile functions in various biological processes. Plays a role in regulating muscle function such as smooth muscle vasorelaxation and cardiac myocyte contractility. May regulate myocardial angiogenesis implicating KDR. Overexpression mediates cardioprotection and angiogenesis after induced damage. Stabilizes monomeric YWHAZ thereby supporting YWHAZ chaperone-like activity. This chain is Heat shock protein beta-6 (HSPB6), found in Bos taurus (Bovine).